Consider the following 92-residue polypeptide: Antifungal protein B (92 aa).

An N-terminal signal peptide occupies residues 1–18 (MQITSIAIVFFAAMGAVA). Residues 19-34 (NPIARESDDLDARDVQ) constitute a propeptide that is removed on maturation. Disulfide bonds link cysteine 42-cysteine 70, cysteine 49-cysteine 77, and cysteine 62-cysteine 88.

The protein resides in the secreted. Its subcellular location is the host cytoplasm. Its function is as follows. Antifungal protein that acts as an inhibitor of growth of human pathogenic molds and yeasts. Is active against the model organism Neurospora crassa, the opportunistic human pathogens Aspergillus fumigatus, Trichophyton rubrum, and Aspergillus terreus. Provokes a reduction of the incidence of infections caused by Penicillium digitatum and Penicillium italicum in oranges and by Penicillium expansum in apples. Low doses of pafB have self-inhibition activity. Also shows activity against the model yeast Saccaromyces cerevisiae and the opportunistic human pathogen Candida albicans. No antibacterial activity is observed on the Gram-negative Escherichia coli and the Gram-positive Bacillus subtilis. Finally, also shows anti-viral activity in a model of HCoV 229E infected L132 cells. This chain is Antifungal protein B, found in Penicillium chrysogenum (Penicillium notatum).